We begin with the raw amino-acid sequence, 1062 residues long: Carbamoyl phosphate synthase large chain (1062 aa).

A carboxyphosphate synthetic domain region spans residues 1 to 401 (MPKRTDIHKI…AMQKAVQSLE (401 aa)). Arg129, Arg169, Gly175, Gly176, Lys208, Ile210, Glu215, Gly241, Ile242, His243, Gln284, and Glu298 together coordinate ATP. Residues 133–327 (KELCQKLGEP…IAKMAAKIAI (195 aa)) enclose the ATP-grasp 1 domain. Mg(2+) contacts are provided by Gln284, Glu298, and Asn300. Positions 284, 298, and 300 each coordinate Mn(2+). Positions 402–546 (IDEKDLYSAK…YSTYDGENES (145 aa)) are oligomerization domain. The segment at 547 to 929 (RKSGKKSVIV…ALYKAFAGAK (383 aa)) is carbamoyl phosphate synthetic domain. An ATP-grasp 2 domain is found at 671 to 861 (DQIIKSLHLH…MAQVATRVIM (191 aa)). ATP contacts are provided by Arg707, Asp746, Leu748, Glu752, Gly777, Val778, His779, Ser780, Gln820, and Glu832. Mg(2+) is bound by residues Gln820, Glu832, and Asn834. The Mn(2+) site is built by Gln820, Glu832, and Asn834. The 133-residue stretch at 930–1062 (MQLPENGNVL…NRSFATDALK (133 aa)) folds into the MGS-like domain. The segment at 930 to 1062 (MQLPENGNVL…NRSFATDALK (133 aa)) is allosteric domain.

It belongs to the CarB family. In terms of assembly, composed of two chains; the small (or glutamine) chain promotes the hydrolysis of glutamine to ammonia, which is used by the large (or ammonia) chain to synthesize carbamoyl phosphate. Tetramer of heterodimers (alpha,beta)4. Mg(2+) serves as cofactor. Mn(2+) is required as a cofactor.

It catalyses the reaction hydrogencarbonate + L-glutamine + 2 ATP + H2O = carbamoyl phosphate + L-glutamate + 2 ADP + phosphate + 2 H(+). It carries out the reaction hydrogencarbonate + NH4(+) + 2 ATP = carbamoyl phosphate + 2 ADP + phosphate + 2 H(+). Its pathway is amino-acid biosynthesis; L-arginine biosynthesis; carbamoyl phosphate from bicarbonate: step 1/1. The protein operates within pyrimidine metabolism; UMP biosynthesis via de novo pathway; (S)-dihydroorotate from bicarbonate: step 1/3. Large subunit of the glutamine-dependent carbamoyl phosphate synthetase (CPSase). CPSase catalyzes the formation of carbamoyl phosphate from the ammonia moiety of glutamine, carbonate, and phosphate donated by ATP, constituting the first step of 2 biosynthetic pathways, one leading to arginine and/or urea and the other to pyrimidine nucleotides. The large subunit (synthetase) binds the substrates ammonia (free or transferred from glutamine from the small subunit), hydrogencarbonate and ATP and carries out an ATP-coupled ligase reaction, activating hydrogencarbonate by forming carboxy phosphate which reacts with ammonia to form carbamoyl phosphate. The protein is Carbamoyl phosphate synthase large chain of Lactobacillus helveticus (strain DPC 4571).